We begin with the raw amino-acid sequence, 151 residues long: Endoribonuclease YbeY (151 aa).

Residues His-113, His-117, and His-123 each coordinate Zn(2+).

It belongs to the endoribonuclease YbeY family. The cofactor is Zn(2+).

It localises to the cytoplasm. In terms of biological role, single strand-specific metallo-endoribonuclease involved in late-stage 70S ribosome quality control and in maturation of the 3' terminus of the 16S rRNA. This chain is Endoribonuclease YbeY, found in Polaromonas naphthalenivorans (strain CJ2).